The sequence spans 297 residues: uncharacterized protein (297 aa).

The next 6 helical transmembrane spans lie at 26-48 (FVLH…IYAI), 80-102 (NIEL…AALF), 134-156 (LFKF…INLG), 185-205 (LGIF…AIVI), 225-247 (LVDT…VAAY), and 262-284 (LVAV…VELY).

The protein resides in the cell membrane. This is an uncharacterized protein from Archaeoglobus fulgidus (strain ATCC 49558 / DSM 4304 / JCM 9628 / NBRC 100126 / VC-16).